Reading from the N-terminus, the 708-residue chain is Nicastrin (708 aa).

An N-terminal signal peptide occupies residues Met1–Ser34. The Lumenal segment spans residues Val35–Glu668. 3 N-linked (GlcNAc...) asparagine glycosylation sites follow: Asn44, Asn54, and Asn128. Cys49 and Cys61 are disulfide-bonded. Cys139 and Cys158 are oxidised to a cystine. N-linked (GlcNAc...) asparagine glycans are attached at residues Asn186 and Asn203. 2 disulfides stabilise this stretch: Cys194–Cys212 and Cys229–Cys247. N-linked (GlcNAc...) asparagine glycans are attached at residues Asn263, Asn386, Asn434, Asn463, Asn507, Asn529, Asn561, Asn572, Asn579, Asn593, and Asn611. Residues Cys585 and Cys619 are joined by a disulfide bond. The chain crosses the membrane as a helical span at residues Phe669–Ile689. The Cytoplasmic portion of the chain corresponds to Asn690 to Tyr708.

Belongs to the nicastrin family. In terms of assembly, component of the gamma-secretase complex. The functional gamma-secretase complex is composed of at least four polypeptides: a presenilin homodimer (PSEN1 or PSEN2), nicastrin (NCSTN), APH1 (APH1A or APH1B) and PEN2. Binds to proteolytic processed C-terminal fragments C83 and C99 of the amyloid precursor protein (APP). Interacts with PSEN1 and PSEN2. N-glycosylated.

It localises to the membrane. Its subcellular location is the cytoplasmic vesicle membrane. The protein resides in the melanosome. Functionally, essential subunit of the gamma-secretase complex, an endoprotease complex that catalyzes the intramembrane cleavage of integral membrane proteins such as Notch receptors and APP (amyloid-beta precursor protein). The gamma-secretase complex plays a role in Notch and Wnt signaling cascades and regulation of downstream processes via its role in processing key regulatory proteins, and by regulating cytosolic CTNNB1 levels. The sequence is that of Nicastrin (Ncstn) from Rattus norvegicus (Rat).